Reading from the N-terminus, the 236-residue chain is T-cell surface glycoprotein CD8 alpha chain (236 aa).

Residues 1-26 form the signal peptide; sequence MASRVICFLSLNLLLLDVITRLQVSG. An Ig-like V-type domain is found at 27–130; that stretch reads QLQLSPKKVD…ITSNSVMYFS (104 aa). Residues 27-189 lie on the Extracellular side of the membrane; sequence QLQLSPKKVD…MGLGFACDIY (163 aa). A disulfide bond links cysteine 47 and cysteine 119. N-linked (GlcNAc...) asparagine glycosylation is present at asparagine 63. Threonine 144 carries O-linked (GalNAc...) threonine; partial glycosylation. O-linked (GalNAc...) threonine glycans are attached at residues threonine 148, threonine 152, threonine 158, and threonine 160. The interval 150–170 is disordered; sequence APTPVPPPTGTPRPLRPEACR. The helical transmembrane segment at 190–210 threads the bilayer; the sequence is IWAPLAGICAVLLLSLVITLI. Cysteine 211 carries S-palmitoyl cysteine lipidation. Residues 211–236 lie on the Cytoplasmic side of the membrane; it reads CCHRNRRRVCKCPRPLVKPRPSEKFV.

Forms disulfide-linked heterodimers with CD8B at the cell surface. Also forms homodimers in several cell types including NK-cells or peripheral blood T-lymphocytes. Interacts with the MHC class I HLA-A/B2M dimer. Interacts with LCK in a zinc-dependent manner. Palmitoylated, but association with CD8B seems to be more important for the enrichment of CD8A in lipid rafts. In terms of processing, O-glycosylated. Post-translationally, phosphorylated in cytotoxic T-lymphocytes (CTLs) following activation.

The protein resides in the cell membrane. Integral membrane glycoprotein that plays an essential role in the immune response and serves multiple functions in responses against both external and internal offenses. In T-cells, functions primarily as a coreceptor for MHC class I molecule:peptide complex. The antigens presented by class I peptides are derived from cytosolic proteins while class II derived from extracellular proteins. Interacts simultaneously with the T-cell receptor (TCR) and the MHC class I proteins presented by antigen presenting cells (APCs). In turn, recruits the Src kinase LCK to the vicinity of the TCR-CD3 complex. LCK then initiates different intracellular signaling pathways by phosphorylating various substrates ultimately leading to lymphokine production, motility, adhesion and activation of cytotoxic T-lymphocytes (CTLs). This mechanism enables CTLs to recognize and eliminate infected cells and tumor cells. In NK-cells, the presence of CD8A homodimers at the cell surface provides a survival mechanism allowing conjugation and lysis of multiple target cells. CD8A homodimer molecules also promote the survival and differentiation of activated lymphocytes into memory CD8 T-cells. This chain is T-cell surface glycoprotein CD8 alpha chain (Cd8a), found in Rattus norvegicus (Rat).